A 237-amino-acid polypeptide reads, in one-letter code: Segregation and condensation protein A (237 aa).

The protein belongs to the ScpA family. Component of a cohesin-like complex composed of ScpA, ScpB and the Smc homodimer, in which ScpA and ScpB bind to the head domain of Smc. The presence of the three proteins is required for the association of the complex with DNA.

It is found in the cytoplasm. Functionally, participates in chromosomal partition during cell division. May act via the formation of a condensin-like complex containing Smc and ScpB that pull DNA away from mid-cell into both cell halves. The sequence is that of Segregation and condensation protein A from Streptococcus thermophilus (strain CNRZ 1066).